Consider the following 420-residue polypeptide: Protein ECERIFERUM 26-like (420 aa).

It belongs to the plant acyltransferase family. As to expression, highly expressed in flowers. Expressed in leaves.

Involved in biosynthesis of the epicuticular wax. Plays a role in very-long-chain fatty acid (VLCFA) biosynthesis and is required for VLCFA elongation in leaf. Despite its classification as a BAHD acyltransferase based on sequence homology, CER26L does not seem to share the catalytic mechanism of the members of the BAHD family. The sequence is that of Protein ECERIFERUM 26-like (CER26L) from Arabidopsis thaliana (Mouse-ear cress).